The primary structure comprises 342 residues: S-adenosylmethionine:tRNA ribosyltransferase-isomerase (342 aa).

This sequence belongs to the QueA family. In terms of assembly, monomer.

The protein localises to the cytoplasm. It catalyses the reaction 7-aminomethyl-7-carbaguanosine(34) in tRNA + S-adenosyl-L-methionine = epoxyqueuosine(34) in tRNA + adenine + L-methionine + 2 H(+). It functions in the pathway tRNA modification; tRNA-queuosine biosynthesis. In terms of biological role, transfers and isomerizes the ribose moiety from AdoMet to the 7-aminomethyl group of 7-deazaguanine (preQ1-tRNA) to give epoxyqueuosine (oQ-tRNA). The chain is S-adenosylmethionine:tRNA ribosyltransferase-isomerase from Bacillus velezensis (strain DSM 23117 / BGSC 10A6 / LMG 26770 / FZB42) (Bacillus amyloliquefaciens subsp. plantarum).